The following is a 513-amino-acid chain: Cytochrome P450 monooxygenase eqxH (513 aa).

A helical membrane pass occupies residues 13–32; the sequence is QYAILCGITVFTLFIVQLSL. Asn-130 and Asn-295 each carry an N-linked (GlcNAc...) asparagine glycan. Cys-449 serves as a coordination point for heme.

It belongs to the cytochrome P450 family. Requires heme as cofactor.

It is found in the membrane. It functions in the pathway mycotoxin biosynthesis. Cytochrome P450 monooxygenase; part of the gene cluster that mediates the biosynthesis of equisetin, a trans-fused decalin-containing tetramic acid with antimicrobial activity. The PKS module of eqxS together with the enoylreductase eqxC catalyze the formation of the polyketide unit which is then conjugated to L-serine by the condensation domain of the eqxS NRPS module. Activity of the Dieckmann cyclase domain (RED) results in release of the Dieckmann product intermediate. Diels-Alderase eqx3 is involved in endo-selective Diels-Alder cycloaddition to form the decalin ring, leading to the production of N-desmethylequisetin also called trichosetin. Subsequent N-methylation is carried out by eqxD to give equisetin. This chain is Cytochrome P450 monooxygenase eqxH, found in Fusarium heterosporum.